The following is a 416-amino-acid chain: Gamma-glutamyl phosphate reductase (416 aa).

Belongs to the gamma-glutamyl phosphate reductase family.

It localises to the cytoplasm. It carries out the reaction L-glutamate 5-semialdehyde + phosphate + NADP(+) = L-glutamyl 5-phosphate + NADPH + H(+). It participates in amino-acid biosynthesis; L-proline biosynthesis; L-glutamate 5-semialdehyde from L-glutamate: step 2/2. Catalyzes the NADPH-dependent reduction of L-glutamate 5-phosphate into L-glutamate 5-semialdehyde and phosphate. The product spontaneously undergoes cyclization to form 1-pyrroline-5-carboxylate. This Streptococcus pyogenes serotype M1 protein is Gamma-glutamyl phosphate reductase.